Here is a 393-residue protein sequence, read N- to C-terminus: 4-hydroxyphenylpyruvate dioxygenase (393 aa).

VOC domains follow at residues Ala17 to Arg148 and Phe179 to Lys339. Residues His182, His267, and Glu350 each contribute to the Fe cation site.

Belongs to the 4HPPD family. The cofactor is Fe cation. Expressed in the hypodermis and intestine.

It carries out the reaction 3-(4-hydroxyphenyl)pyruvate + O2 = homogentisate + CO2. Its pathway is amino-acid degradation; L-phenylalanine degradation; acetoacetate and fumarate from L-phenylalanine: step 3/6. In terms of biological role, key enzyme in the degradation of tyrosine. The polypeptide is 4-hydroxyphenylpyruvate dioxygenase (Caenorhabditis elegans).